The following is a 50-amino-acid chain: Fungus-induced protein 3 (50 aa).

The polypeptide is Fungus-induced protein 3 (fip-3) (Caenorhabditis elegans).